A 692-amino-acid chain; its full sequence is MAREFSLENTRNIGIMAHIDAGKTTTTERILFYTGRIHKIGETHEGASQMDWMEQEQERGITITSAATTAQWKNNRINIIDTPGHVDFTVEVERSLRVLDGAVAVLDAQSGVEPQTETVWRQATTYGVPRVVFVNKMDKTGADFLYSVSTLHDRLQANAHPIQLPIGAEDNFEGIIDLVDMVAYFYEDDLGTRTEAKEIPDEYKEQAQEYHEKLVEAAAELDEELMMKYLEGEELTKDELKAAIRKGTCNVEFYPVLCGSAFKNKGVQLMLDAVLDYLPSPLDVPAIKGHVPDTEEEAVRKPGDDQPFAALAFKVMTDPYVGKLTFFRVYSGTLDSGSYVKNSTKDKRERVGRILQMHANHREEISTVYSGDIAAAVGLKDTSTGDTLCDEKNLVILESMEFPEPVIHLSVEPKSKADQDKMGLALAKLAEEDPTFKTHTDEETGQTIIAGMGELHLDIIVDRLRREFKVEANVGAPQVSYRETIRQAAQVEGKFVRQSGGRGQYGHVWIEFSPNEEGAGFEFVNGIVGGVVPREYIPSVQAGLEEALENGLLAGYPVIDIKAKLFDGSYHDVDSSEMAFKIAASMALKNAKSKCNPVLLEPMMKVEVVVPEEYMGDVMGDITSRRGRVEGMEARGNAQVVKAFVPLAEMFGYATSLRSRTQGRGTYTMFFDHYEEVPKSISEEIIKKNSGE.

Positions 8–282 (ENTRNIGIMA…AVLDYLPSPL (275 aa)) constitute a tr-type G domain. GTP-binding positions include 17-24 (AHIDAGKT), 81-85 (DTPGH), and 135-138 (NKMD).

This sequence belongs to the TRAFAC class translation factor GTPase superfamily. Classic translation factor GTPase family. EF-G/EF-2 subfamily.

It is found in the cytoplasm. In terms of biological role, catalyzes the GTP-dependent ribosomal translocation step during translation elongation. During this step, the ribosome changes from the pre-translocational (PRE) to the post-translocational (POST) state as the newly formed A-site-bound peptidyl-tRNA and P-site-bound deacylated tRNA move to the P and E sites, respectively. Catalyzes the coordinated movement of the two tRNA molecules, the mRNA and conformational changes in the ribosome. The protein is Elongation factor G (fusA) of Halalkalibacterium halodurans (strain ATCC BAA-125 / DSM 18197 / FERM 7344 / JCM 9153 / C-125) (Bacillus halodurans).